The sequence spans 546 residues: Glucose-6-phosphate isomerase (546 aa).

Glu-353 serves as the catalytic Proton donor. Active-site residues include His-384 and Lys-512.

The protein belongs to the GPI family.

It is found in the cytoplasm. The catalysed reaction is alpha-D-glucose 6-phosphate = beta-D-fructose 6-phosphate. It participates in carbohydrate biosynthesis; gluconeogenesis. The protein operates within carbohydrate degradation; glycolysis; D-glyceraldehyde 3-phosphate and glycerone phosphate from D-glucose: step 2/4. Catalyzes the reversible isomerization of glucose-6-phosphate to fructose-6-phosphate. The protein is Glucose-6-phosphate isomerase of Methylococcus capsulatus (strain ATCC 33009 / NCIMB 11132 / Bath).